The chain runs to 207 residues: Dephospho-CoA kinase (207 aa).

The DPCK domain occupies 5-207 (IVGLTGGIAS…AALQTHRIEN (203 aa)). Residue 13–18 (ASGKSA) coordinates ATP.

The protein belongs to the CoaE family.

It localises to the cytoplasm. The catalysed reaction is 3'-dephospho-CoA + ATP = ADP + CoA + H(+). It participates in cofactor biosynthesis; coenzyme A biosynthesis; CoA from (R)-pantothenate: step 5/5. Catalyzes the phosphorylation of the 3'-hydroxyl group of dephosphocoenzyme A to form coenzyme A. In Xanthomonas campestris pv. campestris (strain ATCC 33913 / DSM 3586 / NCPPB 528 / LMG 568 / P 25), this protein is Dephospho-CoA kinase.